Reading from the N-terminus, the 3365-residue chain is Probable serine/threonine-protein kinase roco9 (3365 aa).

Disordered stretches follow at residues Met-1 to Lys-177, Glu-397 to Gln-497, Pro-944 to Ser-985, Ile-1044 to Ile-1098, and Gln-1261 to Gly-1301. Basic and acidic residues predominate over residues Phe-8–Lys-27. Composition is skewed to low complexity over residues Leu-51–Thr-84, Ser-100–Ser-116, Ser-137–Thr-169, and Glu-397–Pro-415. The 195-residue stretch at Thr-243–Asn-437 folds into the Rho-GAP domain. Polar residues predominate over residues Pro-421–Ser-434. Low complexity-rich tracts occupy residues Asp-435–Lys-445, Asn-457–Gln-489, Ser-959–Lys-974, Ile-1044–Asn-1096, and Asn-1262–Gly-1301. Residues Ile-804 to Phe-1484 enclose the Myotubularin phosphatase domain. LRR repeat units lie at residues Ser-1510–Phe-1526, Ser-1527–Leu-1549, Ser-1550–Leu-1572, Lys-1576–Leu-1599, Ser-1600–Met-1622, Gln-1624–Cys-1645, Val-1646–Leu-1668, Ser-1670–Asp-1691, Met-1697–Met-1720, Ser-1722–Asn-1743, Leu-1744–Leu-1770, Val-1772–Leu-1789, Pro-1790–Leu-1812, Leu-1814–Lys-1835, Leu-1837–Lys-1861, and Leu-1863–Leu-1887. Basic and acidic residues predominate over residues Ser-1932 to Lys-1947. Disordered regions lie at residues Ser-1932–Lys-1963, Asn-2190–Ser-2389, Ala-2507–Pro-2567, and Ser-2674–Asn-2704. Low complexity-rich tracts occupy residues Asn-2190–Asn-2205, Ser-2216–Ser-2389, Asn-2522–Pro-2567, and Gln-2676–His-2688. The Protein kinase domain maps to Glu-3008 to Leu-3269. Residues Ile-3014 to Val-3022 and Lys-3035 each bind ATP. Asp-3132 acts as the Proton acceptor in catalysis. A compositionally biased stretch (low complexity) spans Gln-3311–Pro-3333. Residues Gln-3311–Asn-3365 are disordered. Positions Asp-3354 to Asn-3365 are enriched in acidic residues.

It belongs to the protein kinase superfamily. TKL Ser/Thr protein kinase family. ROCO subfamily.

The catalysed reaction is L-seryl-[protein] + ATP = O-phospho-L-seryl-[protein] + ADP + H(+). The enzyme catalyses L-threonyl-[protein] + ATP = O-phospho-L-threonyl-[protein] + ADP + H(+). The chain is Probable serine/threonine-protein kinase roco9 (roco9) from Dictyostelium discoideum (Social amoeba).